Reading from the N-terminus, the 1101-residue chain is Rho GTPase-activating protein 30 (1101 aa).

A Rho-GAP domain is found at 20–215; it reads CDLQEHLQHS…FILTHVDQLF (196 aa). Disordered regions lie at residues 224–243, 300–400, and 451–529; these read EVES…SPED, HETK…RAGG, and ALQH…AEDG. A compositionally biased stretch (basic and acidic residues) spans 308–318; it reads RGAEDREDKSN. Acidic residues predominate over residues 360–376; it reads LENDSIEAAEGEQEPEA. The span at 459–472 shows a compositional bias: pro residues; the sequence is ASGPGPGPGLGPGP. Residues 508–520 show a composition bias toward low complexity; that stretch reads DSFSFLEDSSSSE. Ser-576 bears the Phosphoserine mark. 2 disordered regions span residues 621–906 and 965–991; these read GPKP…QPSP and CPRP…SWRN. 4 stretches are compositionally biased toward basic and acidic residues: residues 658 to 694, 701 to 735, 759 to 770, and 779 to 822; these read GEDK…DRGE, TKVR…KGVE, EEAQVEAGRDLE, and AEEK…DSRS. Residues 976-991 show a composition bias toward low complexity; it reads GERAWGSRASRSSWRN. Ser-996 bears the Phosphoserine mark. Residues 1050–1101 are disordered; that stretch reads LELPSEGAEGSGSRSRLSLPPREPQVPDPLLSSQRRSYAFETQANPGKGEGL. Low complexity predominate over residues 1053–1069; that stretch reads PSEGAEGSGSRSRLSLP. Polar residues predominate over residues 1080–1094; that stretch reads LSSQRRSYAFETQAN.

Interacts with RHOU in a GTP-independent manner.

The protein resides in the cytoplasmic vesicle. In terms of biological role, GTPase-activating protein (GAP) for RAC1 and RHOA, but not for CDC42. The polypeptide is Rho GTPase-activating protein 30 (ARHGAP30) (Homo sapiens (Human)).